Reading from the N-terminus, the 183-residue chain is uncharacterized protein (183 aa).

It to M.leprae ML2442.

This is an uncharacterized protein from Mycobacterium tuberculosis (strain CDC 1551 / Oshkosh).